Consider the following 396-residue polypeptide: Ribosomal RNA large subunit methyltransferase I (396 aa).

The 78-residue stretch at 2–79 (AVRIKLKPGR…REEEIDREFF (78 aa)) folds into the PUA domain.

Belongs to the methyltransferase superfamily. RlmI family.

Its subcellular location is the cytoplasm. It catalyses the reaction cytidine(1962) in 23S rRNA + S-adenosyl-L-methionine = 5-methylcytidine(1962) in 23S rRNA + S-adenosyl-L-homocysteine + H(+). In terms of biological role, specifically methylates the cytosine at position 1962 (m5C1962) of 23S rRNA. The sequence is that of Ribosomal RNA large subunit methyltransferase I from Shewanella sp. (strain MR-4).